Reading from the N-terminus, the 217-residue chain is NADPH-dependent 3-demethoxyubiquinone 3-hydroxylase, mitochondrial (217 aa).

2 tandem repeats follow at residues 49–130 (IIER…SALM) and 131–217 (GKEA…STRV). Positions 49–217 (IIERIIRVDH…KTAIWLSTRV (169 aa)) are 2 X approximate tandem repeats. Arg-52 provides a ligand contact to NADH. Fe cation-binding residues include Glu-61, Glu-91, His-94, Glu-143, Glu-178, and His-181. Arg-216 lines the NADH pocket.

Belongs to the COQ7 family. As to quaternary structure, component of a multi-subunit COQ enzyme complex. The cofactor is Fe cation.

The protein localises to the mitochondrion inner membrane. It catalyses the reaction a 5-methoxy-2-methyl-3-(all-trans-polyprenyl)benzoquinone + NADH + O2 = a 3-demethylubiquinone + NAD(+) + H2O. It participates in cofactor biosynthesis; ubiquinone biosynthesis. In terms of biological role, catalyzes the hydroxylation of the 5-methoxy-2-methyl-3-(all-trans-polyprenyl)benzoquinone at the C6 position and participates in the biosynthesis of ubiquinone. Catalyzes the reaction through a substrate-mediated reduction pathway, whereby NADH shuttles electrons to 5-methoxy-2-methyl-3-(all-trans-decaprenyl)benzoquinone, which then transfers the electrons to the two Fe(3+) centers. The binding of 5-methoxy-2-methyl-3-(all-trans-polyprenyl)benzoquinone (DMQn) mediates reduction of the diiron center by nicotinamide adenine dinucleotide (NADH) and initiates oxygen activation for subsequent DMQ hydroxylation. Also has a structural role in the COQ enzyme complex, stabilizing other COQ polypeptides. This is NADPH-dependent 3-demethoxyubiquinone 3-hydroxylase, mitochondrial from Dictyostelium discoideum (Social amoeba).